Consider the following 413-residue polypeptide: Histidinol-phosphate aminotransferase, chloroplastic (413 aa).

The transit peptide at 1 to 35 (MGVIELCNTSSICIGRANPSCCSIERNQRRRIICM) directs the protein to the chloroplast. At Lys273 the chain carries N6-(pyridoxal phosphate)lysine.

The protein belongs to the class-II pyridoxal-phosphate-dependent aminotransferase family. Histidinol-phosphate aminotransferase subfamily. Homodimer. Requires pyridoxal 5'-phosphate as cofactor. As to expression, expressed in flowers, leaves, stems and roots.

The protein localises to the plastid. Its subcellular location is the chloroplast. It catalyses the reaction L-histidinol phosphate + 2-oxoglutarate = 3-(imidazol-4-yl)-2-oxopropyl phosphate + L-glutamate. Its pathway is amino-acid biosynthesis; L-histidine biosynthesis; L-histidine from 5-phospho-alpha-D-ribose 1-diphosphate: step 7/9. The sequence is that of Histidinol-phosphate aminotransferase, chloroplastic (HPA) from Nicotiana plumbaginifolia (Leadwort-leaved tobacco).